A 293-amino-acid polypeptide reads, in one-letter code: Mycothiol S-conjugate amidase (293 aa).

Zn(2+) contacts are provided by His13, Asp16, and His144.

It belongs to the MshB deacetylase family. Mca subfamily. Monomer. Zn(2+) serves as cofactor.

It catalyses the reaction mycothiol S-conjugate + H2O = an N-acetyl-L-cysteine-S-conjugate + 1D-myo-inositol 2-amino-2-deoxy-alpha-D-glucopyranoside. In terms of biological role, a mycothiol (MSH, N-acetylcysteinyl-glucosaminyl-inositol) S-conjugate amidase, it recycles conjugated MSH to the N-acetyl cysteine conjugate (AcCys S-conjugate, a mercapturic acid) and the MSH precursor. Involved in MSH-dependent detoxification of a number of alkylating agents and antibiotics. In Streptomyces coelicolor (strain ATCC BAA-471 / A3(2) / M145), this protein is Mycothiol S-conjugate amidase.